The sequence spans 115 residues: Aspartate 1-decarboxylase (115 aa).

Catalysis depends on Ser25, which acts as the Schiff-base intermediate with substrate; via pyruvic acid. Ser25 bears the Pyruvic acid (Ser) mark. A substrate-binding site is contributed by Thr57. Tyr58 (proton donor) is an active-site residue. 71–73 (GAA) is a substrate binding site.

Belongs to the PanD family. As to quaternary structure, heterooctamer of four alpha and four beta subunits. Pyruvate is required as a cofactor. In terms of processing, is synthesized initially as an inactive proenzyme, which is activated by self-cleavage at a specific serine bond to produce a beta-subunit with a hydroxyl group at its C-terminus and an alpha-subunit with a pyruvoyl group at its N-terminus.

It is found in the cytoplasm. The enzyme catalyses L-aspartate + H(+) = beta-alanine + CO2. It participates in cofactor biosynthesis; (R)-pantothenate biosynthesis; beta-alanine from L-aspartate: step 1/1. Its function is as follows. Catalyzes the pyruvoyl-dependent decarboxylation of aspartate to produce beta-alanine. In Campylobacter curvus (strain 525.92), this protein is Aspartate 1-decarboxylase.